Here is a 240-residue protein sequence, read N- to C-terminus: Ribonuclease PH (240 aa).

Residues arginine 86 and 124–126 each bind phosphate; that span reads GTR.

This sequence belongs to the RNase PH family. As to quaternary structure, homohexameric ring arranged as a trimer of dimers.

The enzyme catalyses tRNA(n+1) + phosphate = tRNA(n) + a ribonucleoside 5'-diphosphate. Its function is as follows. Phosphorolytic 3'-5' exoribonuclease that plays an important role in tRNA 3'-end maturation. Removes nucleotide residues following the 3'-CCA terminus of tRNAs; can also add nucleotides to the ends of RNA molecules by using nucleoside diphosphates as substrates, but this may not be physiologically important. Probably plays a role in initiation of 16S rRNA degradation (leading to ribosome degradation) during starvation. The chain is Ribonuclease PH from Rickettsia prowazekii (strain Madrid E).